The primary structure comprises 400 residues: Elongation factor Tu (400 aa).

Residues 10-210 (KPHINVGTIG…ALDEYIPEPK (201 aa)) enclose the tr-type G domain. The G1 stretch occupies residues 19–26 (GHVDHGKT). 19–26 (GHVDHGKT) contacts GTP. Thr-26 serves as a coordination point for Mg(2+). Residues 64-68 (GITIA) form a G2 region. The G3 stretch occupies residues 85 to 88 (DCPG). GTP-binding positions include 85 to 89 (DCPGH) and 140 to 143 (NKAD). A G4 region spans residues 140 to 143 (NKAD). Positions 178-180 (SAL) are G5.

The protein belongs to the TRAFAC class translation factor GTPase superfamily. Classic translation factor GTPase family. EF-Tu/EF-1A subfamily. In terms of assembly, monomer.

The protein localises to the cytoplasm. The enzyme catalyses GTP + H2O = GDP + phosphate + H(+). Functionally, GTP hydrolase that promotes the GTP-dependent binding of aminoacyl-tRNA to the A-site of ribosomes during protein biosynthesis. The polypeptide is Elongation factor Tu (Rubrobacter xylanophilus (strain DSM 9941 / JCM 11954 / NBRC 16129 / PRD-1)).